Here is a 150-residue protein sequence, read N- to C-terminus: UPF0178 protein DMR_20710 (150 aa).

The protein belongs to the UPF0178 family.

In Solidesulfovibrio magneticus (strain ATCC 700980 / DSM 13731 / RS-1) (Desulfovibrio magneticus), this protein is UPF0178 protein DMR_20710.